The chain runs to 400 residues: GTPase Obg (400 aa).

Residues 1 to 159 form the Obg domain; the sequence is MRFVDEAVIT…REIRLELKVL (159 aa). Residues 160-333 enclose the OBG-type G domain; that stretch reads ADVGLLGMPN…VVYYLMDQIE (174 aa). GTP is bound by residues 166-173, 191-195, 213-216, 283-286, and 314-316; these read GMPNAGKS, FTTMV, DIPG, NKLD, and SGL. Ser-173 and Thr-193 together coordinate Mg(2+).

It belongs to the TRAFAC class OBG-HflX-like GTPase superfamily. OBG GTPase family. As to quaternary structure, monomer. The cofactor is Mg(2+).

The protein resides in the cytoplasm. Its function is as follows. An essential GTPase which binds GTP, GDP and possibly (p)ppGpp with moderate affinity, with high nucleotide exchange rates and a fairly low GTP hydrolysis rate. Plays a role in control of the cell cycle, stress response, ribosome biogenesis and in those bacteria that undergo differentiation, in morphogenesis control. This chain is GTPase Obg, found in Acinetobacter baylyi (strain ATCC 33305 / BD413 / ADP1).